The sequence spans 209 residues: Large ribosomal subunit protein uL4 (209 aa).

The tract at residues 45–77 (RQGTHKAKERAEVTGSTRKIKKQKGTGTARAGS) is disordered.

It belongs to the universal ribosomal protein uL4 family. Part of the 50S ribosomal subunit.

Its function is as follows. One of the primary rRNA binding proteins, this protein initially binds near the 5'-end of the 23S rRNA. It is important during the early stages of 50S assembly. It makes multiple contacts with different domains of the 23S rRNA in the assembled 50S subunit and ribosome. In terms of biological role, forms part of the polypeptide exit tunnel. The polypeptide is Large ribosomal subunit protein uL4 (Flavobacterium johnsoniae (strain ATCC 17061 / DSM 2064 / JCM 8514 / BCRC 14874 / CCUG 350202 / NBRC 14942 / NCIMB 11054 / UW101) (Cytophaga johnsonae)).